A 349-amino-acid polypeptide reads, in one-letter code: Hydroxymethylglutaryl-CoA synthase (349 aa).

Residues aspartate 30 and alanine 31 each coordinate (3S)-3-hydroxy-3-methylglutaryl-CoA. The active-site Proton donor/acceptor is the glutamate 82. Positions 114 and 155 each coordinate (3S)-3-hydroxy-3-methylglutaryl-CoA. The active-site Acyl-thioester intermediate is cysteine 114. Arginine 203 is a CoA binding site. Threonine 205 and histidine 238 together coordinate (3S)-3-hydroxy-3-methylglutaryl-CoA. Catalysis depends on histidine 238, which acts as the Proton donor/acceptor. Position 243 (lysine 243) interacts with CoA. Residues asparagine 270 and serine 300 each coordinate (3S)-3-hydroxy-3-methylglutaryl-CoA.

This sequence belongs to the thiolase-like superfamily. Archaeal HMG-CoA synthase family. In terms of assembly, interacts with acetoacetyl-CoA thiolase that catalyzes the precedent step in the pathway and with a DUF35 protein. The acetoacetyl-CoA thiolase/HMG-CoA synthase complex channels the intermediate via a fused CoA-binding site, which allows for efficient coupling of the endergonic thiolase reaction with the exergonic HMGCS reaction.

It catalyses the reaction acetoacetyl-CoA + acetyl-CoA + H2O = (3S)-3-hydroxy-3-methylglutaryl-CoA + CoA + H(+). The protein operates within metabolic intermediate biosynthesis; (R)-mevalonate biosynthesis; (R)-mevalonate from acetyl-CoA: step 2/3. Catalyzes the condensation of acetyl-CoA with acetoacetyl-CoA to form 3-hydroxy-3-methylglutaryl-CoA (HMG-CoA). Functions in the mevalonate (MVA) pathway leading to isopentenyl diphosphate (IPP), a key precursor for the biosynthesis of isoprenoid compounds that are building blocks of archaeal membrane lipids. The protein is Hydroxymethylglutaryl-CoA synthase of Methanococcus maripaludis (strain C7 / ATCC BAA-1331).